The sequence spans 225 residues: DNA-binding response regulator MtrA (225 aa).

The region spanning 4-117 is the Response regulatory domain; sequence RILVVDDDAS…ELVARVRARL (114 aa). Aspartate 53 is subject to 4-aspartylphosphate. Positions 125 to 224 form a DNA-binding region, ompR/PhoB-type; it reads AEMLSIADVE…VRGVGYKAGP (100 aa).

Post-translationally, phosphorylated by MtrB.

Functionally, member of the two-component regulatory system MtrA/MtrB. In Mycolicibacterium paratuberculosis (strain ATCC BAA-968 / K-10) (Mycobacterium paratuberculosis), this protein is DNA-binding response regulator MtrA (mtrA).